The primary structure comprises 1833 residues: Protein TIC 214 (1833 aa).

A run of 6 helical transmembrane segments spans residues 18-38 (IINS…FSIG), 67-87 (FIMG…HLAL), 90-110 (PHTI…WNNH), 127-147 (LSIQ…YFIL), 175-195 (VGWL…LVWI), and 218-238 (IFSI…PSPI). Positions 254-301 (EETNLEIEKTSETKETKQEEEGFTEEDPSPSLFSEEKEDPDKIDETEK) are disordered. Composition is skewed to basic and acidic residues over residues 259-273 (EIEK…KQEE) and 292-301 (DPDKIDETEK).

This sequence belongs to the TIC214 family. As to quaternary structure, part of the Tic complex.

It is found in the plastid. The protein resides in the chloroplast inner membrane. In terms of biological role, involved in protein precursor import into chloroplasts. May be part of an intermediate translocation complex acting as a protein-conducting channel at the inner envelope. This is Protein TIC 214 from Spinacia oleracea (Spinach).